Here is a 419-residue protein sequence, read N- to C-terminus: Phosphoglycerate kinase (419 aa).

Substrate contacts are provided by residues 21 to 23 (DFN), Arg36, 60 to 63 (HLGD), Arg137, and Arg174. ATP-binding positions include Lys225, Gly316, Glu347, and 376 to 379 (GGDS).

Belongs to the phosphoglycerate kinase family. Monomer.

The protein resides in the cytoplasm. It catalyses the reaction (2R)-3-phosphoglycerate + ATP = (2R)-3-phospho-glyceroyl phosphate + ADP. The protein operates within carbohydrate degradation; glycolysis; pyruvate from D-glyceraldehyde 3-phosphate: step 2/5. This Treponema pallidum (strain Nichols) protein is Phosphoglycerate kinase (pgk).